A 275-amino-acid chain; its full sequence is Formamidopyrimidine-DNA glycosylase (275 aa).

Pro2 (schiff-base intermediate with DNA) is an active-site residue. Glu3 serves as the catalytic Proton donor. The Proton donor; for beta-elimination activity role is filled by Lys59. DNA contacts are provided by His92, Arg111, and Lys155. An FPG-type zinc finger spans residues 240 to 274 (YVYGQTGEPCRRCGHEIEKMKLGGRGTHYCPHCQQ). The active-site Proton donor; for delta-elimination activity is Arg264.

It belongs to the FPG family. As to quaternary structure, monomer. Requires Zn(2+) as cofactor.

It catalyses the reaction Hydrolysis of DNA containing ring-opened 7-methylguanine residues, releasing 2,6-diamino-4-hydroxy-5-(N-methyl)formamidopyrimidine.. It carries out the reaction 2'-deoxyribonucleotide-(2'-deoxyribose 5'-phosphate)-2'-deoxyribonucleotide-DNA = a 3'-end 2'-deoxyribonucleotide-(2,3-dehydro-2,3-deoxyribose 5'-phosphate)-DNA + a 5'-end 5'-phospho-2'-deoxyribonucleoside-DNA + H(+). Involved in base excision repair of DNA damaged by oxidation or by mutagenic agents. Acts as a DNA glycosylase that recognizes and removes damaged bases. Has a preference for oxidized purines, such as 7,8-dihydro-8-oxoguanine (8-oxoG). Has AP (apurinic/apyrimidinic) lyase activity and introduces nicks in the DNA strand. Cleaves the DNA backbone by beta-delta elimination to generate a single-strand break at the site of the removed base with both 3'- and 5'-phosphates. The protein is Formamidopyrimidine-DNA glycosylase of Exiguobacterium sp. (strain ATCC BAA-1283 / AT1b).